The sequence spans 387 residues: 17-beta-hydroxysteroid dehydrogenase type 2 (387 aa).

A helical; Signal-anchor for type II membrane protein membrane pass occupies residues 4–24 (FFSDTAWICLAVPTVLCGTVF). 82 to 111 (QKAVLVTGGDCGLGHALCKYLDELGFTVFA) provides a ligand contact to NAD(+). Ser219 serves as a coordination point for substrate. Tyr232 is an active-site residue.

This sequence belongs to the short-chain dehydrogenases/reductases (SDR) family. In terms of assembly, homodimer. As to expression, expressed in placenta.

The protein localises to the endoplasmic reticulum membrane. The enzyme catalyses 17beta-estradiol + NAD(+) = estrone + NADH + H(+). It catalyses the reaction testosterone + NAD(+) = androst-4-ene-3,17-dione + NADH + H(+). The catalysed reaction is 17beta-hydroxy-5alpha-androstan-3-one + NAD(+) = 5alpha-androstan-3,17-dione + NADH + H(+). It carries out the reaction (20S)-hydroxypregn-4-en-3-one + NAD(+) = progesterone + NADH + H(+). In terms of biological role, catalyzes the NAD-dependent oxidation of the highly active 17beta-hydroxysteroids, such as estradiol (E2), testosterone (T), and dihydrotestosterone (DHT), to their less active forms and thus regulates the biological potency of these steroids. Oxidizes estradiol to estrone, testosterone to androstenedione, and dihydrotestosterone to 5alpha-androstan-3,17-dione. Also has 20-alpha-HSD activity. In Homo sapiens (Human), this protein is 17-beta-hydroxysteroid dehydrogenase type 2.